The following is a 90-amino-acid chain: Probable Fe(2+)-trafficking protein (90 aa).

It belongs to the Fe(2+)-trafficking protein family.

Could be a mediator in iron transactions between iron acquisition and iron-requiring processes, such as synthesis and/or repair of Fe-S clusters in biosynthetic enzymes. This Verminephrobacter eiseniae (strain EF01-2) protein is Probable Fe(2+)-trafficking protein.